The chain runs to 122 residues: Large ribosomal subunit protein uL14 (122 aa).

The protein belongs to the universal ribosomal protein uL14 family. As to quaternary structure, part of the 50S ribosomal subunit. Forms a cluster with proteins L3 and L19. In the 70S ribosome, L14 and L19 interact and together make contacts with the 16S rRNA in bridges B5 and B8.

Functionally, binds to 23S rRNA. Forms part of two intersubunit bridges in the 70S ribosome. The polypeptide is Large ribosomal subunit protein uL14 (Afipia carboxidovorans (strain ATCC 49405 / DSM 1227 / KCTC 32145 / OM5) (Oligotropha carboxidovorans)).